A 248-amino-acid polypeptide reads, in one-letter code: 4-hydroxy-tetrahydrodipicolinate reductase (248 aa).

NAD(+) contacts are provided by residues 8–13 (GAKGRV), Asp-34, 76–78 (GTT), and 103–106 (APNF). Catalysis depends on His-133, which acts as the Proton donor/acceptor. His-134 contacts (S)-2,3,4,5-tetrahydrodipicolinate. The active-site Proton donor is Lys-137. Position 143 to 144 (143 to 144 (GT)) interacts with (S)-2,3,4,5-tetrahydrodipicolinate.

It belongs to the DapB family.

The protein resides in the cytoplasm. The catalysed reaction is (S)-2,3,4,5-tetrahydrodipicolinate + NAD(+) + H2O = (2S,4S)-4-hydroxy-2,3,4,5-tetrahydrodipicolinate + NADH + H(+). It catalyses the reaction (S)-2,3,4,5-tetrahydrodipicolinate + NADP(+) + H2O = (2S,4S)-4-hydroxy-2,3,4,5-tetrahydrodipicolinate + NADPH + H(+). It participates in amino-acid biosynthesis; L-lysine biosynthesis via DAP pathway; (S)-tetrahydrodipicolinate from L-aspartate: step 4/4. Catalyzes the conversion of 4-hydroxy-tetrahydrodipicolinate (HTPA) to tetrahydrodipicolinate. The protein is 4-hydroxy-tetrahydrodipicolinate reductase of Corynebacterium urealyticum (strain ATCC 43042 / DSM 7109).